We begin with the raw amino-acid sequence, 707 residues long: DNA ligase (707 aa).

The segment at 1–23 is disordered; that stretch reads MSSKATQDPEAVLAEQSDDATEA. Residues 53 to 57, 103 to 104, and glutamate 133 each bind NAD(+); these read DAEFD and SL. Catalysis depends on lysine 135, which acts as the N6-AMP-lysine intermediate. Residues arginine 156, glutamate 196, lysine 315, and lysine 339 each coordinate NAD(+). The Zn(2+) site is built by cysteine 433, cysteine 436, cysteine 452, and cysteine 458. Residues 622-707 form the BRCT domain; sequence SIERTLDGLS…LENGPDTPDS (86 aa).

Belongs to the NAD-dependent DNA ligase family. LigA subfamily. Requires Mg(2+) as cofactor. Mn(2+) is required as a cofactor.

It catalyses the reaction NAD(+) + (deoxyribonucleotide)n-3'-hydroxyl + 5'-phospho-(deoxyribonucleotide)m = (deoxyribonucleotide)n+m + AMP + beta-nicotinamide D-nucleotide.. Its function is as follows. DNA ligase that catalyzes the formation of phosphodiester linkages between 5'-phosphoryl and 3'-hydroxyl groups in double-stranded DNA using NAD as a coenzyme and as the energy source for the reaction. It is essential for DNA replication and repair of damaged DNA. The polypeptide is DNA ligase (Mycolicibacterium vanbaalenii (strain DSM 7251 / JCM 13017 / BCRC 16820 / KCTC 9966 / NRRL B-24157 / PYR-1) (Mycobacterium vanbaalenii)).